The chain runs to 373 residues: Dual-specificity RNA methyltransferase RlmN (373 aa).

Glu-94 serves as the catalytic Proton acceptor. Residues 100–339 (EDDRATLCVS…VIVRKTRGDD (240 aa)) form the Radical SAM core domain. Cysteines 107 and 344 form a disulfide. Cys-114, Cys-118, and Cys-121 together coordinate [4Fe-4S] cluster. Residues 168 to 169 (GE), Ser-200, 222 to 224 (SIH), and Asn-301 each bind S-adenosyl-L-methionine. The active-site S-methylcysteine intermediate is Cys-344.

This sequence belongs to the radical SAM superfamily. RlmN family. The cofactor is [4Fe-4S] cluster.

Its subcellular location is the cytoplasm. It catalyses the reaction adenosine(2503) in 23S rRNA + 2 reduced [2Fe-2S]-[ferredoxin] + 2 S-adenosyl-L-methionine = 2-methyladenosine(2503) in 23S rRNA + 5'-deoxyadenosine + L-methionine + 2 oxidized [2Fe-2S]-[ferredoxin] + S-adenosyl-L-homocysteine. The catalysed reaction is adenosine(37) in tRNA + 2 reduced [2Fe-2S]-[ferredoxin] + 2 S-adenosyl-L-methionine = 2-methyladenosine(37) in tRNA + 5'-deoxyadenosine + L-methionine + 2 oxidized [2Fe-2S]-[ferredoxin] + S-adenosyl-L-homocysteine. Specifically methylates position 2 of adenine 2503 in 23S rRNA and position 2 of adenine 37 in tRNAs. m2A2503 modification seems to play a crucial role in the proofreading step occurring at the peptidyl transferase center and thus would serve to optimize ribosomal fidelity. This is Dual-specificity RNA methyltransferase RlmN from Shewanella baltica (strain OS223).